Consider the following 414-residue polypeptide: Enterobactin exporter EntS (414 aa).

Topologically, residues 1–21 (MNRQSWLLNLSLLKTHPAFRA) are cytoplasmic. A helical transmembrane segment spans residues 22–42 (VFLARFISIVSLGLLGVAVPV). Residues 43–55 (QIQMMTHSTWQVG) are Periplasmic-facing. The helical transmembrane segment at 56–76 (LSVTLTGGAMFIGLMVGGVLA) threads the bilayer. The Cytoplasmic segment spans residues 77-83 (DRYERKK). A helical transmembrane segment spans residues 84–104 (VILLARGTCGIGFIGLCVNAL). At 105–109 (LPEPS) the chain is on the periplasmic side. The chain crosses the membrane as a helical span at residues 110-130 (LLAIYLLGLWDGFFASLGVTA). Over 131 to 156 (LLAATPALVGRENLMQAGAITMLTVR) the chain is Cytoplasmic. The chain crosses the membrane as a helical span at residues 157-177 (LGSVISPMLGGILLASGGVAW). N178 is a topological domain (periplasmic). Residues 179 to 199 (YGLAAAGTFITLLPLLTLPRL) traverse the membrane as a helical segment. The Cytoplasmic portion of the chain corresponds to 200–218 (PVPPQPRENPFIALLAAFR). The chain crosses the membrane as a helical span at residues 219–239 (FLLASPLIGGIALLGGLVTMA). Residues 240–256 (SAVRVLYPALAMSWQMS) are Periplasmic-facing. Residues 257–277 (AAQIGLLYAAIPLGAAIGALT) traverse the membrane as a helical segment. Topologically, residues 278–287 (SGQLAHSVRP) are cytoplasmic. Residues 288–307 (GLIMLVSTVGSFLAVGLFAI) form a helical membrane-spanning segment. The Periplasmic segment spans residues 308 to 313 (MPIWIA). A helical membrane pass occupies residues 314-336 (GVICLALFGWLSAISSLLQYTLL). Over 337 to 356 (QTQTPENMLGRMNGLWTAQN) the chain is Cytoplasmic. A helical membrane pass occupies residues 357–377 (VTGDAIGAALLGGLGAMMTPV). Residue A378 is a topological domain, periplasmic. A helical membrane pass occupies residues 379–399 (SASVSGFGLVIIGLLLLLVLG). The Cytoplasmic portion of the chain corresponds to 400-414 (ELRRFRQTPPVSDAG).

This sequence belongs to the major facilitator superfamily. EntS (TC 2.A.1.38) family.

It localises to the cell inner membrane. In terms of biological role, component of an export pathway for enterobactin. This is Enterobactin exporter EntS from Salmonella typhi.